The primary structure comprises 153 residues: Cytochrome c-type biogenesis protein CcmE (153 aa).

Over 1–8 (MATRRGRR) the chain is Cytoplasmic. Residues 9-29 (ALLIAGGVGLLALAAALVLNA) form a helical; Signal-anchor for type II membrane protein membrane-spanning segment. At 30 to 153 (LRSNLVFFFS…PSATLQTEAR (124 aa)) the chain is on the periplasmic side. Heme-binding residues include His124 and Tyr128.

It belongs to the CcmE/CycJ family.

It localises to the cell inner membrane. Functionally, heme chaperone required for the biogenesis of c-type cytochromes. Transiently binds heme delivered by CcmC and transfers the heme to apo-cytochromes in a process facilitated by CcmF and CcmH. In Bordetella bronchiseptica (strain ATCC BAA-588 / NCTC 13252 / RB50) (Alcaligenes bronchisepticus), this protein is Cytochrome c-type biogenesis protein CcmE.